Reading from the N-terminus, the 246-residue chain is 14-3-3 protein beta/alpha (246 aa).

N-acetylmethionine is present on Met1. Thr2 carries the post-translational modification N-acetylthreonine; in 14-3-3 protein beta/alpha, N-terminally processed. Thr2 is subject to Phosphothreonine. Position 5 is an N6-acetyllysine (Lys5). Lys51 bears the N6-acetyllysine; alternate mark. Residue Lys51 forms a Glycyl lysine isopeptide (Lys-Gly) (interchain with G-Cter in SUMO2); alternate linkage. At Ser60 the chain carries Phosphoserine. N6-acetyllysine is present on Lys70. Tyr84 and Tyr106 each carry 3'-nitrotyrosine. Lys117 is modified (N6-acetyllysine). Ser186 and Ser232 each carry phosphoserine.

It belongs to the 14-3-3 family. As to quaternary structure, homodimer. Interacts with SAMSN1 and PRKCE. Interacts with AKAP13. Interacts with SSH1 and TORC2/CRTC2. Interacts with ABL1; the interaction results in cytoplasmic location of ABL1 and inhibition of cABL-mediated apoptosis. Interacts with ROR2 (dimer); the interaction results in phosphorylation of YWHAB on tyrosine residues. Interacts with GAB2. Interacts with YAP1 (phosphorylated form). Interacts with the phosphorylated (by AKT1) form of SRPK2. Interacts with PKA-phosphorylated AANAT. Interacts with MYO1C. Interacts with SIRT2. Interacts with the 'Thr-369' phosphorylated form of DAPK2. Interacts with PI4KB, TBC1D22A and TBC1D22B. Interacts with the 'Ser-1134' and 'Ser-1161' phosphorylated form of SOS1. Interacts (via phosphorylated form) with YWHAB; this interaction occurs in a protein kinase AKT1-dependent manner. Interacts with SLITRK1. Interacts with SYNPO2 (phosphorylated form); YWHAB competes with ACTN2 for interaction with SYNPO2. Interacts with RIPOR2 (via phosphorylated form); this interaction occurs in a chemokine-dependent manner and does not compete for binding of RIPOR2 with RHOA nor blocks inhibition of RIPOR2-mediated RHOA activity. Interacts with MARK2 and MARK3. Interacts with TESK1; the interaction is dependent on the phosphorylation of TESK1 'Ser-439' and inhibits TESK1 kinase activity. Interacts with MEFV. Interacts with HDAC4. Interacts with ADAM22 (via C-terminus). Post-translationally, the alpha, brain-specific form differs from the beta form in being phosphorylated. Phosphorylated on Ser-60 by protein kinase C delta type catalytic subunit in a sphingosine-dependent fashion.

It is found in the cytoplasm. The protein resides in the melanosome. Adapter protein implicated in the regulation of a large spectrum of both general and specialized signaling pathways. Binds to a large number of partners, usually by recognition of a phosphoserine or phosphothreonine motif. Binding generally results in the modulation of the activity of the binding partner. Negative regulator of osteogenesis. Blocks the nuclear translocation of the phosphorylated form (by AKT1) of SRPK2 and antagonizes its stimulatory effect on cyclin D1 expression resulting in blockage of neuronal apoptosis elicited by SRPK2. Negative regulator of signaling cascades that mediate activation of MAP kinases via AKAP13. The protein is 14-3-3 protein beta/alpha (YWHAB) of Bos taurus (Bovine).